Here is an 84-residue protein sequence, read N- to C-terminus: Protein Tlp homolog (84 aa).

The segment at Met-1–Val-20 is disordered.

Belongs to the Tlp family.

This chain is Protein Tlp homolog, found in Caldanaerobacter subterraneus subsp. tengcongensis (strain DSM 15242 / JCM 11007 / NBRC 100824 / MB4) (Thermoanaerobacter tengcongensis).